We begin with the raw amino-acid sequence, 557 residues long: Dihydroxy-acid dehydratase (557 aa).

D78 lines the Mg(2+) pocket. C119 serves as a coordination point for [2Fe-2S] cluster. Residues D120 and K121 each contribute to the Mg(2+) site. K121 bears the N6-carboxylysine mark. Position 192 (C192) interacts with [2Fe-2S] cluster. E442 is a Mg(2+) binding site. The active-site Proton acceptor is S468.

This sequence belongs to the IlvD/Edd family. Homodimer. It depends on [2Fe-2S] cluster as a cofactor. The cofactor is Mg(2+).

It catalyses the reaction (2R)-2,3-dihydroxy-3-methylbutanoate = 3-methyl-2-oxobutanoate + H2O. It carries out the reaction (2R,3R)-2,3-dihydroxy-3-methylpentanoate = (S)-3-methyl-2-oxopentanoate + H2O. It functions in the pathway amino-acid biosynthesis; L-isoleucine biosynthesis; L-isoleucine from 2-oxobutanoate: step 3/4. Its pathway is amino-acid biosynthesis; L-valine biosynthesis; L-valine from pyruvate: step 3/4. Its function is as follows. Functions in the biosynthesis of branched-chain amino acids. Catalyzes the dehydration of (2R,3R)-2,3-dihydroxy-3-methylpentanoate (2,3-dihydroxy-3-methylvalerate) into 2-oxo-3-methylpentanoate (2-oxo-3-methylvalerate) and of (2R)-2,3-dihydroxy-3-methylbutanoate (2,3-dihydroxyisovalerate) into 2-oxo-3-methylbutanoate (2-oxoisovalerate), the penultimate precursor to L-isoleucine and L-valine, respectively. The sequence is that of Dihydroxy-acid dehydratase from Bacillus cereus (strain 03BB102).